A 31-amino-acid polypeptide reads, in one-letter code: PTEN upstream open reading frame MP31 (31 aa).

As to quaternary structure, interacts with lactate dehydrogenases LDHA and LDHB; interaction with mitochondrial LDH leads to inhibition of lactate dehydrogenase activity, preventing conversion of lactate to pyruvate. In terms of tissue distribution, expressed in brain (at protein level). Expressed at lower levels in glioblastomas than in normal brain tissue (at protein level).

It localises to the mitochondrion. In terms of biological role, inhibits lactate dehydrogenase (LDH)-mediated conversion of lactate to pyruvate in mitochondria by competing with mitochondrial LDH for binding to NAD(+). Also inhibits cellular lactate utilization. The sequence is that of PTEN upstream open reading frame MP31 from Homo sapiens (Human).